The sequence spans 994 residues: Chloride channel protein E (994 aa).

Residues 1–33 are disordered; it reads MTRKENEESESLSSSSSPIDNSNNNNNNNNHSI. Residues 1–163 are Cytoplasmic-facing; it reads MTRKENEESE…HWLGKERIST (163 aa). The segment covering 11-32 has biased composition (low complexity); sequence SLSSSSSPIDNSNNNNNNNNHS. A run of 11 helical transmembrane segments spans residues 164-184, 227-247, 271-291, 300-320, 334-354, 362-382, 410-430, 449-469, 505-525, 527-547, and 554-574; these read LLFIPTLGILIALMGILCDFL, IVFVGYSVFFALISVCCISFI, VLGFKTLVSKIVGMVCASAAG, FMHASAIISQMLMNLKVFGAI, ALTSGVVANFGAPIGGLLFAI, VMGNLWKGFLCATTTAIIFFL, LITFVGIGIITGLIGAFFVFI, IILVLVVSLFSAIITYSAGPL, LLVFIVVKLILTAFNIVLPIP, GAITPFIVTGAALGRLFGEIL, and QAIEPAGFAAIASAGLVSGTI. The 62-residue stretch at 644-705 folds into the CBS 1 domain; that stretch reads MKKNINYLSM…LDIHIENIEQ (62 aa). 3 disordered regions span residues 715 to 767, 802 to 822, and 846 to 872; these read FVNN…NSEN, IKPNQDESSSNSNGGSSSDFE, and DENSSLGEKPIIEHDDEDDDEEEGDGI. Composition is skewed to low complexity over residues 717–764 and 809–822; these read NNNN…NSNN and SSSNSNGGSSSDFE. A compositionally biased stretch (acidic residues) spans 859 to 870; the sequence is HDDEDDDEEEGD. The CBS 2 domain maps to 944-994; it reads MDLAPSQVPDLTPLNKVFHLFTMLGLGFTYVTSLGKLVGVITKNSLMEQDL.

This sequence belongs to the chloride channel (TC 2.A.49) family.

It is found in the membrane. In terms of biological role, voltage-gated chloride channel. Chloride channels may have several functions including the regulation of cell volume, membrane potential stabilization and signal transduction. The sequence is that of Chloride channel protein E (clcE) from Dictyostelium discoideum (Social amoeba).